We begin with the raw amino-acid sequence, 1401 residues long: Uveal autoantigen with coiled-coil domains and ankyrin repeats protein (1401 aa).

ANK repeat units lie at residues 25–53 (LMRAAERGDVEKVSSILAKKGVNPGKLDV), 54–83 (EGRSAFHVVASKGNLECLNAILIHGVDITT), 87–116 (AGRNALHLAAKYGHALCLQKLLQYNCPTEH), 120–149 (QGRTALHDAAMADCPSSIQLLCDHGASVNA), 153–182 (DGRTPLVLATQMCRPTICQLLIDRGADINS), and 186–215 (QNRTALMLGCEYGCKDAVEVLIKNGADVTL). Ser-265 is modified (phosphoserine). Coiled coils occupy residues 273-361 (TKSN…SRFK), 423-827 (ENEI…EKIY), and 856-1368 (ALSS…VIAI). A Glycyl lysine isopeptide (Lys-Gly) (interchain with G-Cter in SUMO2) cross-link involves residue Lys-1020.

Component of the apoptosome complex, composed of APAF1, pro-caspase-9 and UACA. In the complex, it probably interacts directly with APAF1. Interacts with LGALS3. Interacts with ARF6 and ACTB. Interacts with RAB39A. As to expression, highly expressed in muscle and heart, moderately in liver, kidney and pancreas, and weakly in placenta and lung.

The protein resides in the nucleus. It is found in the cytoplasm. It localises to the cytoskeleton. In terms of biological role, regulates APAF1 expression and plays an important role in the regulation of stress-induced apoptosis. Promotes apoptosis by regulating three pathways, apoptosome up-regulation, LGALS3/galectin-3 down-regulation and NF-kappa-B inactivation. Regulates the redistribution of APAF1 into the nucleus after proapoptotic stress. Down-regulates the expression of LGALS3 by inhibiting NFKB1. Its function is as follows. Modulates isoactin dynamics to regulate the morphological alterations required for cell growth and motility. Interaction with ARF6 may modulate cell shape and motility after injury. May be involved in multiple neurite formation. The polypeptide is Uveal autoantigen with coiled-coil domains and ankyrin repeats protein (UACA) (Bos taurus (Bovine)).